The chain runs to 500 residues: Galactofuranose transporter ATP-binding protein YtfR (500 aa).

ABC transporter domains are found at residues 10–245 (LRTE…LGRE) and 259–497 (LSDK…IMNA). 42–49 (GENGAGKS) serves as a coordination point for ATP.

This sequence belongs to the ABC transporter superfamily. In terms of assembly, the complex is composed of two ATP-binding proteins (YtfR), two transmembrane proteins (YtfT and YjfF) and a solute-binding protein (YtfQ).

The protein resides in the cell inner membrane. The catalysed reaction is D-galactofuranose(out) + ATP + H2O = D-galactofuranose(in) + ADP + phosphate + H(+). Its function is as follows. Part of the ABC transporter complex YtfQRT-YjfF involved in galactofuranose transport. Responsible for energy coupling to the transport system. This Escherichia coli O157:H7 protein is Galactofuranose transporter ATP-binding protein YtfR (ytfR).